The primary structure comprises 262 residues: Pyridoxine 5'-phosphate synthase (262 aa).

Residue N6 participates in 3-amino-2-oxopropyl phosphate binding. 8–9 (DH) serves as a coordination point for 1-deoxy-D-xylulose 5-phosphate. Residue R17 participates in 3-amino-2-oxopropyl phosphate binding. H42 functions as the Proton acceptor in the catalytic mechanism. 1-deoxy-D-xylulose 5-phosphate is bound by residues R44 and H49. E69 functions as the Proton acceptor in the catalytic mechanism. T99 contributes to the 1-deoxy-D-xylulose 5-phosphate binding site. The active-site Proton donor is H213. 3-amino-2-oxopropyl phosphate-binding positions include G214 and 235 to 236 (GH).

The protein belongs to the PNP synthase family. Homooctamer; tetramer of dimers.

The protein localises to the cytoplasm. The enzyme catalyses 3-amino-2-oxopropyl phosphate + 1-deoxy-D-xylulose 5-phosphate = pyridoxine 5'-phosphate + phosphate + 2 H2O + H(+). Its pathway is cofactor biosynthesis; pyridoxine 5'-phosphate biosynthesis; pyridoxine 5'-phosphate from D-erythrose 4-phosphate: step 5/5. Functionally, catalyzes the complicated ring closure reaction between the two acyclic compounds 1-deoxy-D-xylulose-5-phosphate (DXP) and 3-amino-2-oxopropyl phosphate (1-amino-acetone-3-phosphate or AAP) to form pyridoxine 5'-phosphate (PNP) and inorganic phosphate. The polypeptide is Pyridoxine 5'-phosphate synthase (Wolinella succinogenes (strain ATCC 29543 / DSM 1740 / CCUG 13145 / JCM 31913 / LMG 7466 / NCTC 11488 / FDC 602W) (Vibrio succinogenes)).